Consider the following 294-residue polypeptide: MNFQSVIATLHQFWAERGCLIAQPYDIEKGAGTKNPHTFLRALGPEPWAVAYIEPCRRPTDGRYGENPNRFQHYYQYQVLIKPSPDNIQDIYLDSLRALGIRPEDHDIRFVEDNWEDATVGAWGTGWEVWLDGMEITQFTYFQQCGGIDCRPVSIEITYGLERLAMYLQEVEAITKIHWTDDITYGDVFLQNEIEQSTYNFEASNPELLLTLFNLYEQEASQLTERGLVLPSLDYVMKCSHTFNLLDARGVISVTERTRYIARIRHLARKVANLYVEQREKLGFPLLKNVPVAR.

Belongs to the class-II aminoacyl-tRNA synthetase family. As to quaternary structure, tetramer of two alpha and two beta subunits.

It localises to the cytoplasm. The catalysed reaction is tRNA(Gly) + glycine + ATP = glycyl-tRNA(Gly) + AMP + diphosphate. This chain is Glycine--tRNA ligase alpha subunit, found in Nostoc sp. (strain PCC 7120 / SAG 25.82 / UTEX 2576).